The sequence spans 125 residues: MDCDGLRDDQWERIRGFVPGGTKGKRGPRTNNRLFLDALLWMARSGGRWRDLPERLGDYRAVKRRYYRWIEMGVLDEMLAVLAREADLEWLMIDSTIVRAHQHAAGARRAKGGRMPRAWVGLEAG.

The protein to transposase of insertion sequence IS6501.

This is an uncharacterized protein from Sinorhizobium fredii (strain NBRC 101917 / NGR234).